Here is a 29-residue protein sequence, read N- to C-terminus: Cyclotide mech-3 (29 aa).

The cyclopeptide (Gly-Asn) cross-link spans 1-29 (GLPTCGETCTLGKCNTPKCTCNWPICYKN). 3 disulfide bridges follow: Cys5–Cys19, Cys9–Cys21, and Cys14–Cys26.

This is a cyclic peptide. Post-translationally, contains 3 disulfide bonds.

Probably participates in a plant defense mechanism (Potential). Binds to and induces leakage in phospholipd membranes, particularly ones containing 1-palmitoyl-2-oleophosphatidylethanolamine (POPE). In vitro, displays cytotoxicity against cultured cells but no hemolytic activity towards fresh erythrocytes. This chain is Cyclotide mech-3, found in Melicytus chathamicus (Chatham Island mahoe).